A 169-amino-acid polypeptide reads, in one-letter code: 2-C-methyl-D-erythritol 2,4-cyclodiphosphate synthase (169 aa).

A divalent metal cation is bound by residues Asp13 and His15. Residues 13–15 (DVH) and 39–40 (HS) each bind 4-CDP-2-C-methyl-D-erythritol 2-phosphate. His47 contacts a divalent metal cation. 4-CDP-2-C-methyl-D-erythritol 2-phosphate is bound by residues 61–63 (DIG), 66–70 (FPDTD), Phe144, and Arg147.

This sequence belongs to the IspF family. Homotrimer. The cofactor is a divalent metal cation.

It catalyses the reaction 4-CDP-2-C-methyl-D-erythritol 2-phosphate = 2-C-methyl-D-erythritol 2,4-cyclic diphosphate + CMP. It functions in the pathway isoprenoid biosynthesis; isopentenyl diphosphate biosynthesis via DXP pathway; isopentenyl diphosphate from 1-deoxy-D-xylulose 5-phosphate: step 4/6. Functionally, involved in the biosynthesis of isopentenyl diphosphate (IPP) and dimethylallyl diphosphate (DMAPP), two major building blocks of isoprenoid compounds. Catalyzes the conversion of 4-diphosphocytidyl-2-C-methyl-D-erythritol 2-phosphate (CDP-ME2P) to 2-C-methyl-D-erythritol 2,4-cyclodiphosphate (ME-CPP) with a corresponding release of cytidine 5-monophosphate (CMP). The chain is 2-C-methyl-D-erythritol 2,4-cyclodiphosphate synthase from Cupriavidus necator (strain ATCC 17699 / DSM 428 / KCTC 22496 / NCIMB 10442 / H16 / Stanier 337) (Ralstonia eutropha).